The primary structure comprises 72 residues: Cytochrome c oxidase subunit 8C, mitochondrial (72 aa).

The transit peptide at 1 to 29 (MSRLLQFCSSLLRHRVVLFSKPGHSGRLS) directs the protein to the mitochondrion. The Mitochondrial matrix portion of the chain corresponds to 30-40 (HSESPQNQVLT). The helical transmembrane segment at 41–64 (PTESVVGIVVFFATFFIPAAYVMS) threads the bilayer. The Mitochondrial intermembrane segment spans residues 65–72 (NLKFFKGE).

The protein belongs to the cytochrome c oxidase VIII family. As to quaternary structure, component of the cytochrome c oxidase (complex IV, CIV), a multisubunit enzyme composed of 14 subunits. The complex is composed of a catalytic core of 3 subunits MT-CO1, MT-CO2 and MT-CO3, encoded in the mitochondrial DNA, and 11 supernumerary subunits COX4I, COX5A, COX5B, COX6A, COX6B, COX6C, COX7A, COX7B, COX7C, COX8 and NDUFA4, which are encoded in the nuclear genome. The complex exists as a monomer or a dimer and forms supercomplexes (SCs) in the inner mitochondrial membrane with NADH-ubiquinone oxidoreductase (complex I, CI) and ubiquinol-cytochrome c oxidoreductase (cytochrome b-c1 complex, complex III, CIII), resulting in different assemblies (supercomplex SCI(1)III(2)IV(1) and megacomplex MCI(2)III(2)IV(2)).

The protein localises to the mitochondrion inner membrane. It participates in energy metabolism; oxidative phosphorylation. In terms of biological role, component of the cytochrome c oxidase, the last enzyme in the mitochondrial electron transport chain which drives oxidative phosphorylation. The respiratory chain contains 3 multisubunit complexes succinate dehydrogenase (complex II, CII), ubiquinol-cytochrome c oxidoreductase (cytochrome b-c1 complex, complex III, CIII) and cytochrome c oxidase (complex IV, CIV), that cooperate to transfer electrons derived from NADH and succinate to molecular oxygen, creating an electrochemical gradient over the inner membrane that drives transmembrane transport and the ATP synthase. Cytochrome c oxidase is the component of the respiratory chain that catalyzes the reduction of oxygen to water. Electrons originating from reduced cytochrome c in the intermembrane space (IMS) are transferred via the dinuclear copper A center (CU(A)) of subunit 2 and heme A of subunit 1 to the active site in subunit 1, a binuclear center (BNC) formed by heme A3 and copper B (CU(B)). The BNC reduces molecular oxygen to 2 water molecules using 4 electrons from cytochrome c in the IMS and 4 protons from the mitochondrial matrix. This Rattus norvegicus (Rat) protein is Cytochrome c oxidase subunit 8C, mitochondrial (Cox8c).